Reading from the N-terminus, the 84-residue chain is Cell division topological specificity factor (84 aa).

It belongs to the MinE family.

Prevents the cell division inhibition by proteins MinC and MinD at internal division sites while permitting inhibition at polar sites. This ensures cell division at the proper site by restricting the formation of a division septum at the midpoint of the long axis of the cell. The sequence is that of Cell division topological specificity factor from Paraburkholderia xenovorans (strain LB400).